Here is a 342-residue protein sequence, read N- to C-terminus: Glycerol-1-phosphate dehydrogenase [NAD(P)+] (342 aa).

Residues 84-88 and 106-109 contribute to the NAD(+) site; these read GRPID and TSAS. Aspartate 111 provides a ligand contact to substrate. Serine 115 serves as a coordination point for NAD(+). Position 160 (aspartate 160) interacts with substrate. Zn(2+) is bound by residues aspartate 160 and histidine 241. Position 245 (histidine 245) interacts with substrate. Histidine 260 provides a ligand contact to Zn(2+).

This sequence belongs to the glycerol-1-phosphate dehydrogenase family. Homodimer. Requires Zn(2+) as cofactor.

Its subcellular location is the cytoplasm. The enzyme catalyses sn-glycerol 1-phosphate + NAD(+) = dihydroxyacetone phosphate + NADH + H(+). It carries out the reaction sn-glycerol 1-phosphate + NADP(+) = dihydroxyacetone phosphate + NADPH + H(+). It participates in membrane lipid metabolism; glycerophospholipid metabolism. Its function is as follows. Catalyzes the NAD(P)H-dependent reduction of dihydroxyacetonephosphate (DHAP or glycerone phosphate) to glycerol 1-phosphate (G1P). The G1P thus generated is used as the glycerophosphate backbone of phospholipids in the cellular membranes of Archaea. The protein is Glycerol-1-phosphate dehydrogenase [NAD(P)+] of Pyrobaculum arsenaticum (strain DSM 13514 / JCM 11321 / PZ6).